Here is a 434-residue protein sequence, read N- to C-terminus: Transcription factor AP-2-epsilon (434 aa).

The tract at residues 30 to 123 (LNQGPYSSAP…GLSLDPRRDY (94 aa)) is disordered. Over residues 52–62 (PYFPPPYPQPP) the composition is skewed to pro residues. Residues 53 to 58 (YFPPPY) carry the PPxY motif motif. A compositionally biased stretch (polar residues) spans 81–97 (SSINSIHHQHQQPSWHT). Residues 278-408 (RRKAANVTLL…YLLESLKGMD (131 aa)) are H-S-H (helix-span-helix), dimerization. The interval 415–434 (TGNGHSAAESKSEKDIKHRK) is disordered. A compositionally biased stretch (basic and acidic residues) spans 422–434 (AESKSEKDIKHRK).

This sequence belongs to the AP-2 family. Binds DNA as a dimer. Can form homodimers or heterodimers with other AP-2 family members.

It is found in the nucleus. Functionally, sequence-specific DNA-binding protein that interacts with inducible viral and cellular enhancer elements to regulate transcription of selected genes. AP-2 factors bind to the consensus sequence 5'-GCCNNNGGC-3' and activate genes involved in a large spectrum of important biological functions. The protein is Transcription factor AP-2-epsilon of Xenopus laevis (African clawed frog).